Consider the following 88-residue polypeptide: Kunitz-type kappaPI-theraphotoxin-Hs1a (88 aa).

An N-terminal signal peptide occupies residues 1 to 27 (MGIARILSAVLFLSVLFVVTFPALLSA). The propeptide occupies 28–33 (DHHDGR). Residues 37–85 (CRLPSDRGRCKASFERWYFNGRTCAKFIYGGCGGNGNKFPTQEACMKRC) form the BPTI/Kunitz inhibitor domain. Cystine bridges form between cysteine 37/cysteine 85, cysteine 46/cysteine 68, and cysteine 60/cysteine 81.

It belongs to the venom Kunitz-type family. 02 (native) subfamily. As to expression, expressed by the venom gland.

It is found in the secreted. Serine protease inhibitor that inhibits trypsin (Ki=5.54 uM) at a molar ratio of 1:1. The sequence is that of Kunitz-type kappaPI-theraphotoxin-Hs1a from Cyriopagopus schmidti (Chinese bird spider).